We begin with the raw amino-acid sequence, 799 residues long: Cadherin-8 (799 aa).

The first 29 residues, 1–29, serve as a signal peptide directing secretion; sequence MPERLAETLMDLWTPLIILWITLPSCVYT. Positions 30-61 are excised as a propeptide; sequence APMNQAHVLTTGSPLELSRQSEDMRILSRSKR. 5 Cadherin domains span residues 62 to 167, 168 to 276, 277 to 391, 392 to 494, and 495 to 616; these read GWVW…APEF, LNGP…PPKF, AQSL…PPVF, SSPT…DNAP, and EFAS…YVLP. At 62–621 the chain is on the extracellular side; sequence GWVWNQMFVL…AYVLPIGLSM (560 aa). Residue Asn-188 is glycosylated (N-linked (GlcNAc...) asparagine). Residues Asn-463, Asn-473, and Asn-544 are each glycosylated (N-linked (GlcNAc...) asparagine). The chain crosses the membrane as a helical span at residues 622 to 642; the sequence is GALIAILACIILLLVIVVLFV. At 643–799 the chain is on the cytoplasmic side; it reads TLRRHKNEPL…YSVGESDKET (157 aa). Ser-795 is modified (phosphoserine).

The protein resides in the cell membrane. Cadherins are calcium-dependent cell adhesion proteins. They preferentially interact with themselves in a homophilic manner in connecting cells; cadherins may thus contribute to the sorting of heterogeneous cell types. This is Cadherin-8 (Cdh8) from Mus musculus (Mouse).